The chain runs to 412 residues: MSYIQNQDKAVYEAIQNEYNRQNNNIELIASENFVSEAVMEAQGSVMTNKYAEGYPGRRYYGGCDYVDVTETIAIERAKALFGAEHVNVQPHSGSQANMAVYLVALEMGDTVLGMNLSHGGHLTHGSPVNFSGKFYNFVDYGVDKETEKIDYEVVRQLAHEHKPKLIVAGTSAYSRQLDFKKFKEIADEVGAKLMVDMAHIAGLVAAGLHPNPVEHADFVTTTTHKTLRGPRGGLILCKEEYKKDIDKTIFPGIQGGPLEHVIAAKAVAFGEALEQDFKVYQEQVIKNAKVLSQTLQEEGFRIVSGGTDNHLLSVDVKNSVNVTGKEAEATLDSIGITCNKNTIPFDQEKAFVTSGIRLGTPTATTRGFDEEAFKEVGRIISLALKNPNNDTKLKEARERVSRLTAKYPLYE.

(6S)-5,6,7,8-tetrahydrofolate-binding positions include Leu-117 and 121 to 123 (GHL). Lys-226 carries the post-translational modification N6-(pyridoxal phosphate)lysine.

The protein belongs to the SHMT family. As to quaternary structure, homodimer. Pyridoxal 5'-phosphate is required as a cofactor.

It is found in the cytoplasm. It catalyses the reaction (6R)-5,10-methylene-5,6,7,8-tetrahydrofolate + glycine + H2O = (6S)-5,6,7,8-tetrahydrofolate + L-serine. Its pathway is one-carbon metabolism; tetrahydrofolate interconversion. It participates in amino-acid biosynthesis; glycine biosynthesis; glycine from L-serine: step 1/1. Its function is as follows. Catalyzes the reversible interconversion of serine and glycine with tetrahydrofolate (THF) serving as the one-carbon carrier. This reaction serves as the major source of one-carbon groups required for the biosynthesis of purines, thymidylate, methionine, and other important biomolecules. Also exhibits THF-independent aldolase activity toward beta-hydroxyamino acids, producing glycine and aldehydes, via a retro-aldol mechanism. This chain is Serine hydroxymethyltransferase, found in Staphylococcus haemolyticus (strain JCSC1435).